We begin with the raw amino-acid sequence, 310 residues long: UPF0282 protein PF0593 (310 aa).

The protein belongs to the UPF0282 family.

This chain is UPF0282 protein PF0593, found in Pyrococcus furiosus (strain ATCC 43587 / DSM 3638 / JCM 8422 / Vc1).